The sequence spans 604 residues: Protein CBFA2T1 (604 aa).

Residues 32–114 are disordered; sequence TEKHSTMPDS…SSSSLANQQL (83 aa). Residue Ser-41 is modified to Phosphoserine. Positions 63 to 86 are enriched in polar residues; that stretch reads QGAPRTSSFTPTTLTNGTSHSPTA. Low complexity predominate over residues 95-114; it reads NGFSNGPSSSSSSSLANQQL. One can recognise a TAFH domain in the interval 120–215; it reads ARQLSKLKRF…NPAQYLAQHE (96 aa). A disordered region spans residues 230–298; it reads SELLLDVNEN…LPHPTPPPPQ (69 aa). Positions 238–264 are enriched in basic and acidic residues; the sequence is ENGKRRTPDRTKENGFDREPLHSEHPS. Over residues 271 to 285 the composition is skewed to polar residues; sequence SPGQRYSPNNGLSYQ. Residues 289–298 show a composition bias toward pro residues; sequence LPHPTPPPPQ. Residues 337–383 are important for oligomerization; sequence QEEMIDHRLTDREWAEEWKHLDHLLNCIMDMVEKTRRSLTVLRRCQE. The segment at 337-383 is nervy homology region 2 (NHR2); the sequence is QEEMIDHRLTDREWAEEWKHLDHLLNCIMDMVEKTRRSLTVLRRCQE. The tract at residues 401–423 is disordered; it reads DLKKGGGSSSSHSRQQSPVNPDP. The residue at position 417 (Ser-417) is a Phosphoserine. Residues 443-492 are nervy homology region 3 (NHR3); it reads EEIWKKAEEAVNEVKRQAMTELQKAVSEAERKAHDMITTERAKMERTVAE. Residues Cys-515, Cys-518, Cys-526, Cys-529, Cys-535, Cys-539, His-547, and Cys-551 each contribute to the Zn(2+) site. The MYND-type zinc finger occupies 515–551; sequence CWNCGRKASETCSGCNTARYCGSFCQHKDWEKHHHIC. Residues 557-576 show a composition bias toward polar residues; sequence AQQQGDTPAVSSSVTPNSGA. The interval 557 to 604 is disordered; it reads AQQQGDTPAVSSSVTPNSGAGSPMDTPPAATPRSTTPGTPSTIETTPR. A compositionally biased stretch (low complexity) spans 587–604; that stretch reads TPRSTTPGTPSTIETTPR.

This sequence belongs to the CBFA2T family. In terms of assembly, homooligomer. Homotetramerization is mediated by nervy homology region 2 (NRH2). Can interact with CBFA2T2 and CBFA2T3; heterotetramerization between members of the CBFA2T family is proposed. Interacts with TCF12, SIN3A, HDAC1, HDAC2, HDAC3, NCOR1, NCOR2. Interacts with ATN1 (via its N-terminus); the interaction enhances the transcriptional repression. Interacts (via its N-terminus) with ZBTB16; the interaction increases the transcription repression activity of ZBTB16. AML1-MTG8/ETO fusion protein interacts with CBFB. AML1-MTG8/ETO is part of a stable transcription factor complex AETFC in leukemic cells; AETFC formation seems to be involved in recruitment of EP300. AML1-MTG8/ETO nervy homology region 2-mediated oligomerization is proposed to be homotypic, required for AML1-MTG8/ETO-mediated transformation of primary hematopoietic cells and is required for AML1-MTG8/ETO interaction with TCF12. Most abundantly expressed in brain. Lower levels in lung, heart, testis and ovary.

Its subcellular location is the nucleus. Transcriptional corepressor which facilitates transcriptional repression via its association with DNA-binding transcription factors and recruitment of other corepressors and histone-modifying enzymes. Can repress the expression of MMP7 in a ZBTB33-dependent manner. Can repress transactivation mediated by TCF12. Acts as a negative regulator of adipogenesis. The AML1-MTG8/ETO fusion protein frequently found in leukemic cells is involved in leukemogenesis and contributes to hematopoietic stem/progenitor cell self-renewal. This is Protein CBFA2T1 (RUNX1T1) from Homo sapiens (Human).